Here is a 382-residue protein sequence, read N- to C-terminus: Neuropeptide Y receptor type 1 (382 aa).

Topologically, residues 1–33 (MNSTSFSQVENHSIFCNFSENSQFLAFESDDCH) are extracellular. N-linked (GlcNAc...) asparagine glycans are attached at residues Asn-2, Asn-11, and Asn-17. Residues 34–54 (LPLAMIFTLALAYGAVIILGV) traverse the membrane as a helical segment. Topologically, residues 55–75 (TGNLALIMIILKQKEMRNVTN) are cytoplasmic. A helical transmembrane segment spans residues 76-96 (ILIVNLSFSDLLVAIMCLPFT). Residues 97 to 115 (FVYTLMDHWVFGEAMCKLN) lie on the Extracellular side of the membrane. A disulfide bond links Cys-112 and Cys-197. A helical membrane pass occupies residues 116 to 136 (PFVQCVSITVSIFSLVLIAVE). Over 137 to 153 (RHQLIINPRGWRPNNRH) the chain is Cytoplasmic. The chain crosses the membrane as a helical span at residues 154–174 (AYVGIAVIWVLAVVSSLPFLI). Over 175–210 (YQVLTDEPFQNVTLDAFKDKYVCFDKFPSDSHRLSY) the chain is Extracellular. N-linked (GlcNAc...) asparagine glycosylation occurs at Asn-185. The helical transmembrane segment at 211–231 (TTLLLMLQYFGPLCFIFICYF) threads the bilayer. The Cytoplasmic segment spans residues 232–259 (KIYIRLKRRNNMMDKMRDNKYRSSETKR). A helical transmembrane segment spans residues 260–280 (INIMLLSIVVAFAVCWLPLTI). At 281 to 298 (FNTVFDWNHQIIATCNHN) the chain is on the extracellular side. A helical transmembrane segment spans residues 299 to 319 (LLFLLCHLTAMISTCVNPIFY). Residues 320 to 382 (GFLNKNFQRD…KINNDDNEKI (63 aa)) are Cytoplasmic-facing. Cys-337 carries the S-palmitoyl cysteine lipid modification. Residue Ser-367 is modified to Phosphoserine.

It belongs to the G-protein coupled receptor 1 family.

The protein localises to the cell membrane. Receptor for neuropeptide Y and peptide YY. The polypeptide is Neuropeptide Y receptor type 1 (NPY1R) (Canis lupus familiaris (Dog)).